We begin with the raw amino-acid sequence, 135 residues long: uncharacterized protein (135 aa).

This is an uncharacterized protein from Sinorhizobium fredii (strain NBRC 101917 / NGR234).